We begin with the raw amino-acid sequence, 710 residues long: Solute carrier family 15 member 1 (710 aa).

Residues 1-21 form a helical membrane-spanning segment; that stretch reads MGMSKSRGCFGYPLSIFFIVV. Residues 22 to 53 lie on the Extracellular side of the membrane; that stretch reads NEFCERFSYYGMRALLVLYFRNFLGWDDDLST. Residues 54–74 form a helical membrane-spanning segment; it reads AIYHTFVALCYLTPILGALIA. At 75–82 the chain is on the cytoplasmic side; sequence DSWLGKFK. The helical transmembrane segment at 83 to 103 threads the bilayer; that stretch reads TIVSLSIVYTIGQAVISVSSI. The Extracellular segment spans residues 104-118; that stretch reads NDLTDHDHDGSPNNL. The helical transmembrane segment at 119–139 threads the bilayer; it reads PLHVALSMIGLALIALGTGGI. Over 140-161 the chain is Cytoplasmic; that stretch reads KPCVSAFGGDQFEEGQEKQRNR. A helical transmembrane segment spans residues 162-182; it reads FFSIFYLAINAGSLLSTIITP. Residues 183–198 lie on the Extracellular side of the membrane; the sequence is ILRVQQCGIHSQQACY. A helical membrane pass occupies residues 199–219; sequence PLAFGVPAALMAVALIVFVLG. Topologically, residues 220 to 276 are cytoplasmic; sequence SGMYKKFQPQGNIMGKVAKCIRFAIKNRFRHRSKAFPKRNHWLDWAKEKYDERLISQ. Residues 277 to 297 traverse the membrane as a helical segment; that stretch reads IKIMTKVMFLYIPLPMFWALF. Over 298 to 327 the chain is Extracellular; that stretch reads DQQGSRWTLQATTMTGKIGTIEIQPDQMQT. A helical membrane pass occupies residues 328–348; it reads VNAILIVIMVPIVDAVVYPLI. Topologically, residues 349–361 are cytoplasmic; sequence AKCGFNFTSLKKM. Residues 362–382 form a helical membrane-spanning segment; the sequence is TVGMFLASMAFVVAAIVQVEI. Topologically, residues 383–586 are extracellular; sequence DKTLPVFPSG…PPNTVNMALQ (204 aa). An extracellular domain (ECD) region spans residues 383–586; the sequence is DKTLPVFPSG…PPNTVNMALQ (204 aa). N-linked (GlcNAc...) asparagine glycans are attached at residues asparagine 415, asparagine 439, asparagine 510, asparagine 532, and asparagine 539. The helical transmembrane segment at 587–607 threads the bilayer; the sequence is IPQYFLLTCGEVVFSVTGLEF. Residues 608 to 621 are Cytoplasmic-facing; that stretch reads SYSQAPSNMKSVLQ. The chain crosses the membrane as a helical span at residues 622–642; it reads AGWLLTVAIGNIIVLIVAEAG. Topologically, residues 643-647 are extracellular; the sequence is HFDKQ. A helical transmembrane segment spans residues 648–668; that stretch reads WAEYVLFASLLLVVCIIFAIM. Residues 669-710 lie on the Cytoplasmic side of the membrane; that stretch reads ARFYTYINPAEIEAQFDEDEKKKGVGKENPYSSLEPVSQTNM. The interval 687–710 is disordered; it reads DEKKKGVGKENPYSSLEPVSQTNM. A compositionally biased stretch (polar residues) spans 698–710; it reads PYSSLEPVSQTNM.

The protein belongs to the major facilitator superfamily. Proton-dependent oligopeptide transporter (POT/PTR) (TC 2.A.17) family. In terms of assembly, interacts (via extracellular domain region) with trypsin. In terms of tissue distribution, highly expressed in small intestine. Expression is restricted to pinealocytes.

The protein resides in the apical cell membrane. It carries out the reaction a dipeptide(out) + H(+)(out) = a dipeptide(in) + H(+)(in). It catalyses the reaction an L-amino acid tripeptide(out) + H(+)(out) = an L-amino acid tripeptide(in) + H(+)(in). The catalysed reaction is L-alanyl-L-lysine(out) + H(+)(out) = L-alanyl-L-lysine(in) + H(+)(in). The enzyme catalyses L-alanyl-L-proline(out) + H(+)(out) = L-alanyl-L-proline(in) + H(+)(in). It carries out the reaction L-alanyl-L-valine(out) + H(+)(out) = L-alanyl-L-valine(in) + H(+)(in). It catalyses the reaction carnosine(out) + H(+)(out) = carnosine(in) + H(+)(in). The catalysed reaction is glycyl-L-glutamine(out) + H(+)(out) = glycyl-L-glutamine(in) + H(+)(in). The enzyme catalyses glycyl-L-leucine(out) + H(+)(out) = glycyl-L-leucine(in) + H(+)(in). It carries out the reaction glycyl-L-proline(out) + H(+)(out) = glycyl-L-proline(in) + H(+)(in). It catalyses the reaction glycyl-sarcosine(out) + H(+)(out) = glycyl-sarcosine(in) + H(+)(in). The catalysed reaction is L-leucyl-L-leucine(out) + H(+)(out) = L-leucyl-L-leucine(in) + H(+)(in). The enzyme catalyses L-leucyl-L-proline(out) + H(+)(out) = L-leucyl-L-proline(in) + H(+)(in). It carries out the reaction L-phenylalanyl-L-leucine(out) + H(+)(out) = L-phenylalanyl-L-leucine(in) + H(+)(in). It catalyses the reaction L-phenylalanyl-L-phenylalanine(out) + H(+)(out) = L-phenylalanyl-L-phenylalanine(in) + H(+)(in). The catalysed reaction is L-lysyl-glycine(out) + H(+)(out) = L-lysyl-glycine(in) + H(+)(in). The enzyme catalyses L-tyrosylglycine(out) + H(+)(out) = L-tyrosylglycine(in) + H(+)(in). It carries out the reaction L-alanyl-L-aspartate(out) + 2 H(+)(out) = L-alanyl-L-aspartate(in) + 2 H(+)(in). It catalyses the reaction L-aspartyl-glycine(out) + 2 H(+)(out) = L-aspartyl-glycine(in) + 2 H(+)(in). The catalysed reaction is glycyl-L-aspartate(out) + 2 H(+)(out) = glycyl-L-aspartate(in) + 2 H(+)(in). The enzyme catalyses glycyl-L-glutamate(out) + 2 H(+)(out) = glycyl-L-glutamate(in) + 2 H(+)(in). It carries out the reaction L-alanyl-L-leucyl-L-alanine(out) + H(+)(out) = L-alanyl-L-leucyl-L-alanine(in) + H(+)(in). It catalyses the reaction L-alanyl-L-prolylglycine(out) + H(+)(out) = L-alanyl-L-prolylglycine(in) + H(+)(in). The catalysed reaction is glycylglycyl-L-isoleucine(out) + H(+)(out) = glycylglycyl-L-isoleucine(in) + H(+)(in). The enzyme catalyses glycylglycyl-L-proline(out) + H(+)(out) = glycylglycyl-L-proline(in) + H(+)(in). It carries out the reaction L-methionyl-L-phenylalanyl-L-methionine(out) + H(+)(out) = L-methionyl-L-phenylalanyl-L-methionine(in) + H(+)(in). It catalyses the reaction N-acetyl-D-muramoyl-L-alanyl-D-isoglutamine(out) + 2 H(+)(out) = N-acetyl-D-muramoyl-L-alanyl-D-isoglutamine(in) + 2 H(+)(in). The catalysed reaction is N(alpha)-formyl-L-methionyl-L-leucyl-L-phenylalanine(out) + 2 H(+)(out) = N(alpha)-formyl-L-methionyl-L-leucyl-L-phenylalanine(in) + 2 H(+)(in). Its function is as follows. Electrogenic proton-coupled amino-acid transporter that transports oligopeptides of 2 to 4 amino acids with a preference for dipeptides. Transports neutral and monovalently charged peptides with a proton to peptide stoichiometry of 1:1 or 2:1. Primarily responsible for the absorption of dietary di- and tripeptides from the small intestinal lumen. Mediates transepithelial transport of muramyl and N-formylated bacterial dipeptides contributing to recognition of pathogenic bacteria by the mucosal immune system. In Rattus norvegicus (Rat), this protein is Solute carrier family 15 member 1 (Slc15a1).